The primary structure comprises 275 residues: Anamorsin homolog (275 aa).

Residues 1-147 (MTSASIHIGS…QSASSAAATG (147 aa)) are N-terminal SAM-like domain. The interval 148–183 (RINLGGAKTKVKLSLDDDDDDQLIDEDDLLNGGGGM) is linker. Residues Cys-203, Cys-209, Cys-212, and Cys-214 each contribute to the [2Fe-2S] cluster site. The interval 203 to 214 (CGGRKACDNCTC) is fe-S binding site A. Residues Cys-238, Cys-241, Cys-249, and Cys-252 each contribute to the [4Fe-4S] cluster site. 2 short sequence motifs (cx2C motif) span residues 238–241 (CGNC) and 249–252 (CAGC). Positions 238-252 (CGNCAKGDAFRCAGC) are fe-S binding site B.

This sequence belongs to the anamorsin family. As to quaternary structure, monomer. The cofactor is [2Fe-2S] cluster. [4Fe-4S] cluster serves as cofactor.

The protein localises to the cytoplasm. The protein resides in the mitochondrion intermembrane space. Component of the cytosolic iron-sulfur (Fe-S) protein assembly (CIA) machinery. Required for the maturation of extramitochondrial Fe-S proteins. Part of an electron transfer chain functioning in an early step of cytosolic Fe-S biogenesis, facilitating the de novo assembly of a [4Fe-4S] cluster on the cytosolic Fe-S scaffold complex. Electrons are transferred from NADPH via a FAD- and FMN-containing diflavin oxidoreductase. Together with the diflavin oxidoreductase, also required for the assembly of the diferric tyrosyl radical cofactor of ribonucleotide reductase (RNR), probably by providing electrons for reduction during radical cofactor maturation in the catalytic small subunit. This is Anamorsin homolog from Thalassiosira pseudonana (Marine diatom).